A 140-amino-acid polypeptide reads, in one-letter code: ATP synthase epsilon chain (140 aa).

It belongs to the ATPase epsilon chain family. F-type ATPases have 2 components, CF(1) - the catalytic core - and CF(0) - the membrane proton channel. CF(1) has five subunits: alpha(3), beta(3), gamma(1), delta(1), epsilon(1). CF(0) has three main subunits: a, b and c.

It localises to the cell inner membrane. Functionally, produces ATP from ADP in the presence of a proton gradient across the membrane. In Herminiimonas arsenicoxydans, this protein is ATP synthase epsilon chain.